Consider the following 127-residue polypeptide: Large ribosomal subunit protein eL32 (127 aa).

Over residues 37–48 the composition is skewed to basic and acidic residues; the sequence is KWRKPKGTDSKM. The tract at residues 37–65 is disordered; it reads KWRKPKGTDSKMRVKLKGKARSPSIGWSS.

It belongs to the eukaryotic ribosomal protein eL32 family.

This chain is Large ribosomal subunit protein eL32, found in Thermococcus sibiricus (strain DSM 12597 / MM 739).